Reading from the N-terminus, the 116-residue chain is Ly-6/neurotoxin-like protein 1 (116 aa).

The N-terminal stretch at 1-20 (MTPLLTLFLVALIGLPLAQA) is a signal peptide. The UPAR/Ly6 domain maps to 21–105 (LDCHVCAYNG…FAAPATLALA (85 aa)). Disulfide bonds link C23-C46, C26-C33, C39-C64, C68-C85, and C86-C91. The GPI-anchor amidated asparagine moiety is linked to residue N92. Residues 93-116 (GAGFAAPATLALAPILLATLWGLL) constitute a propeptide, removed in mature form.

In terms of assembly, interacts with nAChRs containing alpha-4:beta-2 (CHRNA4:CHRNB2) and alpha-7 (CHRNA7) subunits. Interacts with CHRNA4 probably in the endoplasmic reticulum prior to nAChR pentameric assembly. Interacts with KCNA2/Potassium voltage-gated channel subfamily A member 2.

Its subcellular location is the cell membrane. It is found in the cell projection. The protein resides in the dendrite. It localises to the endoplasmic reticulum. Functionally, acts in different tissues through interaction to nicotinic acetylcholine receptors (nAChRs). The proposed role as modulator of nAChR activity seems to be dependent on the nAChR subtype and stoichiometry, and to involve an effect on nAChR trafficking and its cell surface expression, and on single channel properties of the nAChR inserted in the plasma membrane. Modulates functional properties of nicotinic acetylcholine receptors (nAChRs) to prevent excessive excitation, and hence neurodegeneration. Enhances desensitization by increasing both the rate and extent of desensitization of alpha-4:beta-2-containing nAChRs and slowing recovery from desensitization. Promotes large amplitude ACh-evoked currents through alpha-4:beta-2 nAChRs. Is involved in regulation of the nAChR pentameric assembly in the endoplasmic reticulum. Shifts stoichiometry from high sensitivity alpha-4(2):beta-2(3) to low sensitivity alpha-4(3):beta-2(2) nAChR. In vitro modulates alpha-3:beta-4-containing nAChRs. Reduces cell surface expression of (alpha-3:beta-4)(2):beta-4 and (alpha-3:beta-4)(2):alpha-5 nAChRs suggesting an interaction with nAChR alpha-3(-):(+)beta-4 subunit interfaces and an allosteric mode. Corresponding single channel effects characterized by decreased unitary conductance, altered burst proportions and enhanced desensitization/inactivation seem to depend on nAChR alpha:alpha subunit interfaces and are greater in (alpha-3:beta-2)(2):alpha-3 when compared to (alpha-3:beta-2)(2):alpha-5 nAChRs. Prevents plasticity in the primary visual cortex late in life. In Saimiri boliviensis boliviensis (Bolivian squirrel monkey), this protein is Ly-6/neurotoxin-like protein 1.